The following is a 120-amino-acid chain: Small ribosomal subunit protein bS16 (120 aa).

Positions 81-120 (GLAKRPARNNPQKAEPGEKAKERAAKRAEKAAAPAEDAAA) are disordered. A compositionally biased stretch (basic and acidic residues) spans 95-110 (EPGEKAKERAAKRAEK). Residues 111 to 120 (AAAPAEDAAA) show a composition bias toward low complexity.

Belongs to the bacterial ribosomal protein bS16 family.

The chain is Small ribosomal subunit protein bS16 from Methylobacterium radiotolerans (strain ATCC 27329 / DSM 1819 / JCM 2831 / NBRC 15690 / NCIMB 10815 / 0-1).